We begin with the raw amino-acid sequence, 519 residues long: MPSTTLLFPQKHIRAIPGKIYAFFRELVSGVIISKPDLSHHYSCENATKEEGKDAADEEKTTTSLFPESNNIDRSLNGGCSVIPCSMDVSDLNTPISITLSPENRIKSEVNAKSLLGSRPEQDTGAPIKMSTGVTSSPLSPSGSTPEHSTKVLNNGEEEFICHYCDATFRIRGYLTRHIKKHAIEKAYHCPFFNSATPPDLRCHNSGGFSRRDTYKTHLKARHVLYPKGVKPQDRNKSSGHCAQCGEYFSTIENFVENHIESGDCKALPQGYTKKNEKRSGKLRKIKTSNGHSRFISTSQSVVEPKVLFNKDAVEAMTIVANNSSGNDIISKYGNNKLMLNSENFKVDIPKRKRKYIKKKQQQVSGSTVTTPEVATQNNQEVAPDEISSATIFSPFDTHLLEPVPSSSSESSAEVMFHGKQMKNFLIDINSFTNQQQQAQDNPSFLPLDIEQSSYDLSEDAMSYPIISTQSNRDCTQYDNTKISQILQSQLNPEYLSENHMRETQQYLNFYNDNFGSQF.

The tract at residues 16–35 (IPGKIYAFFRELVSGVIISK) is i. Over residues 47–61 (ATKEEGKDAADEEKT) the composition is skewed to basic and acidic residues. 2 disordered regions span residues 47 to 69 (ATKE…FPES) and 115 to 150 (LLGS…EHST). Residues 65–97 (LFPESNNIDRSLNGGCSVIPCSMDVSDLNTPIS) form an II region. Positions 131–146 (STGVTSSPLSPSGSTP) are enriched in low complexity. Residues 160 to 182 (FICHYCDATFRIRGYLTRHIKKH) form a C2H2-type 1 zinc finger. The C2H2-type 2; atypical zinc finger occupies 188-223 (YHCPFFNSATPPDLRCHNSGGFSRRDTYKTHLKARH). The C2H2-type 3; atypical zinc-finger motif lies at 240-265 (GHCAQCGEYFSTIENFVENHIESGDC). Residues 357–382 (IKKKQQQVSGSTVTTPEVATQNNQEV) form a disordered region. Over residues 364–381 (VSGSTVTTPEVATQNNQE) the composition is skewed to polar residues.

As to quaternary structure, interacts (via Region II) with SSY5; protease component of the SPS-sensor. Post-translationally, phosphorylated by casein kinase I. Phosphorylation is not dependent on the extracellular amino acid levels, but is a prerequisite for proteolytic processing. In terms of processing, activated by the amino acid-induced proteolytic removal of an N-terminal inhibitory domain by serine protease SSY5, an intrinsic component of the SPS-sensor. Processing requires at least 2 components of the SCF(GRR1) ubiquitin ligase complex, namely the F-box protein GRR1 and the E2 enzyme CDC34, but does not depend on the proteasome. Processing is negatively regulated by the protein phosphatase 2A regulatory subunit RTS1.

It is found in the cell membrane. It localises to the nucleus. Its function is as follows. Transcription factor involved in the regulation of gene expression in response to extracellular amino acid levels. Synthesized as latent cytoplasmic precursor, which, upon a signal initiated by the plasma membrane SPS (SSY1-PTR3-SSY5) amino acid sensor system, becomes proteolytically activated and relocates to the nucleus, where it induces the expression of SPS-sensor-regulated genes, including the amino-acid permeases AGP1, BAP2, BAP3 and GNP1. Binding to promoters is facilitated by DAL81. Involved in the repression of genes subject to nitrogen catabolite repression and genes involved in stress response. Negatively regulated by inner nuclear membrane proteins ASI1, ASI2 and ASI3, which prevent unprocessed precursor forms that escape cytoplasmic anchoring from inducing SPS-sensor-regulated genes. May be involved in pre-tRNA splicing. This is Transcription factor STP1 (STP1) from Saccharomyces cerevisiae (strain RM11-1a) (Baker's yeast).